The primary structure comprises 378 residues: Valine--tRNA ligase (378 aa).

The stretch at 307–377 (AGFINKEAEL…IQEQYKAIEA (71 aa)) forms a coiled coil.

It belongs to the class-I aminoacyl-tRNA synthetase family. ValS type 1 subfamily. In terms of assembly, monomer.

It is found in the cytoplasm. It carries out the reaction tRNA(Val) + L-valine + ATP = L-valyl-tRNA(Val) + AMP + diphosphate. Its function is as follows. Catalyzes the attachment of valine to tRNA(Val). As ValRS can inadvertently accommodate and process structurally similar amino acids such as threonine, to avoid such errors, it has a 'posttransfer' editing activity that hydrolyzes mischarged Thr-tRNA(Val) in a tRNA-dependent manner. In Haemophilus parainfluenzae, this protein is Valine--tRNA ligase (valS).